Reading from the N-terminus, the 215-residue chain is Pyridoxine/pyridoxamine 5'-phosphate oxidase (215 aa).

Substrate contacts are provided by residues 11–14 (RRDY) and K69. FMN is bound by residues 64-69 (RVVLLK), 79-80 (YT), K86, and Q108. Residues Y126, R130, and S134 each coordinate substrate. Residues 143–144 (QS) and W188 contribute to the FMN site. Position 194 to 196 (194 to 196 (RLH)) interacts with substrate. R198 contributes to the FMN binding site.

Belongs to the pyridoxamine 5'-phosphate oxidase family. As to quaternary structure, homodimer. The cofactor is FMN.

It carries out the reaction pyridoxamine 5'-phosphate + O2 + H2O = pyridoxal 5'-phosphate + H2O2 + NH4(+). It catalyses the reaction pyridoxine 5'-phosphate + O2 = pyridoxal 5'-phosphate + H2O2. The protein operates within cofactor metabolism; pyridoxal 5'-phosphate salvage; pyridoxal 5'-phosphate from pyridoxamine 5'-phosphate: step 1/1. Its pathway is cofactor metabolism; pyridoxal 5'-phosphate salvage; pyridoxal 5'-phosphate from pyridoxine 5'-phosphate: step 1/1. In terms of biological role, catalyzes the oxidation of either pyridoxine 5'-phosphate (PNP) or pyridoxamine 5'-phosphate (PMP) into pyridoxal 5'-phosphate (PLP). The chain is Pyridoxine/pyridoxamine 5'-phosphate oxidase from Legionella pneumophila (strain Lens).